We begin with the raw amino-acid sequence, 428 residues long: Aspartate--tRNA(Asp) ligase (428 aa).

Residue Glu-166 participates in L-aspartate binding. The tract at residues 188–191 is aspartate; the sequence is QLYK. Arg-210 lines the L-aspartate pocket. ATP is bound by residues 210-212, 218-220, and Glu-351; these read RAE and RHL. Residues Glu-351 and Ser-354 each coordinate Mg(2+). L-aspartate is bound by residues Ser-354 and Arg-358. 399 to 402 contributes to the ATP binding site; it reads GLER.

This sequence belongs to the class-II aminoacyl-tRNA synthetase family. Type 2 subfamily. In terms of assembly, homodimer. It depends on Mg(2+) as a cofactor.

Its subcellular location is the cytoplasm. The enzyme catalyses tRNA(Asp) + L-aspartate + ATP = L-aspartyl-tRNA(Asp) + AMP + diphosphate. Catalyzes the attachment of L-aspartate to tRNA(Asp) in a two-step reaction: L-aspartate is first activated by ATP to form Asp-AMP and then transferred to the acceptor end of tRNA(Asp). This is Aspartate--tRNA(Asp) ligase from Thermoplasma acidophilum (strain ATCC 25905 / DSM 1728 / JCM 9062 / NBRC 15155 / AMRC-C165).